A 297-amino-acid chain; its full sequence is UDP-N-acetylenolpyruvoylglucosamine reductase (297 aa).

Residues I27 to G192 enclose the FAD-binding PCMH-type domain. Residue R170 is part of the active site. Residue S220 is the Proton donor of the active site. E290 is an active-site residue.

It belongs to the MurB family. FAD is required as a cofactor.

It localises to the cytoplasm. It carries out the reaction UDP-N-acetyl-alpha-D-muramate + NADP(+) = UDP-N-acetyl-3-O-(1-carboxyvinyl)-alpha-D-glucosamine + NADPH + H(+). The protein operates within cell wall biogenesis; peptidoglycan biosynthesis. Functionally, cell wall formation. The chain is UDP-N-acetylenolpyruvoylglucosamine reductase from Rubrobacter xylanophilus (strain DSM 9941 / JCM 11954 / NBRC 16129 / PRD-1).